Consider the following 1042-residue polypeptide: FHIP family protein AAEL005291 (1042 aa).

A compositionally biased stretch (polar residues) spans 1 to 14 (MSWLRSSPLRQSFS). Disordered regions lie at residues 1-31 (MSWL…GGNS), 494-514 (NNTS…PQGG), 821-866 (PHSG…KRND), and 905-977 (SNSS…GSPH). The segment covering 839–859 (VSMTSNLSQTTPMQLTPSSSY) has biased composition (polar residues). Low complexity-rich tracts occupy residues 905–940 (SNSS…FMGS) and 956–976 (PSIG…TGSP).

This sequence belongs to the FHIP family.

The sequence is that of FHIP family protein AAEL005291 from Aedes aegypti (Yellowfever mosquito).